Reading from the N-terminus, the 433-residue chain is Xylose isomerase (433 aa).

Active-site residues include histidine 99 and aspartate 102. Residues glutamate 230, glutamate 266, histidine 269, aspartate 294, aspartate 305, aspartate 307, and aspartate 337 each coordinate Mg(2+).

It belongs to the xylose isomerase family. As to quaternary structure, homotetramer. It depends on Mg(2+) as a cofactor.

The protein localises to the cytoplasm. It catalyses the reaction alpha-D-xylose = alpha-D-xylulofuranose. The sequence is that of Xylose isomerase from Cereibacter sphaeroides (strain ATCC 17025 / ATH 2.4.3) (Rhodobacter sphaeroides).